The chain runs to 158 residues: Nuclear cap-binding protein subunit 2 (158 aa).

MRNA is bound by residues tyrosine 17, tyrosine 40, 109–113 (RADWD), 120–124 (RQYGR), and 130–131 (QV). An RRM domain is found at 37-115 (CTLYVGNLSY…RVIRADWDAG (79 aa)). Positions 123–158 (GRGKHGGQVRDEYRKDYDPERGGYNRAIAQKGGDRQ) are disordered. Residues 130-145 (QVRDEYRKDYDPERGG) show a composition bias toward basic and acidic residues.

This sequence belongs to the RRM NCBP2 family. As to quaternary structure, component of the nuclear cap-binding complex (CBC), a heterodimer composed of ncbp-1 and ncbp-2 that interacts with m7GpppG-capped RNA.

Its subcellular location is the nucleus. In terms of biological role, component of the cap-binding complex (CBC), which binds co-transcriptionally to the 5' cap of pre-mRNAs and is involved in various processes such as pre-mRNA splicing and RNA-mediated gene silencing (RNAi). The CBC complex is involved in miRNA-mediated RNA interference and is required for primary microRNAs (miRNAs) processing. In the CBC complex, ncbp-2 recognizes and binds capped RNAs (m7GpppG-capped RNA) but requires ncbp-1 to stabilize the movement of its N-terminal loop and lock the CBC into a high affinity cap-binding state with the cap structure. The polypeptide is Nuclear cap-binding protein subunit 2 (ncbp-2) (Caenorhabditis elegans).